The primary structure comprises 318 residues: Non-homologous end joining protein Ku (318 aa).

One can recognise a Ku domain in the interval 10-193; that stretch reads AFGLVNVPVK…EVQIKPAELK (184 aa). The tract at residues 259 to 318 is disordered; the sequence is SVKARKGGKSDSKDDSDSESDSKESKSDSKPAKKAPAKKAAAKKSTAKKAPAKKAAAKKS. Residues 266 to 289 show a composition bias toward basic and acidic residues; sequence GKSDSKDDSDSESDSKESKSDSKP. The segment covering 290–318 has biased composition (basic residues); it reads AKKAPAKKAAAKKSTAKKAPAKKAAAKKS.

It belongs to the prokaryotic Ku family. As to quaternary structure, homodimer. Interacts with Sir2 and probably also with LigD; may form a trimeric complex during NHEJ.

In terms of biological role, with LigD forms a non-homologous end joining (NHEJ) repair enzyme which repairs blunt-end and 5'-overhang double strand breaks (DSB) with about 50% fidelity, and DSB with non-complementary 3' ends. Plays a partial role in NHEJ on 3'-overhang repair of complementary ends. NHEJ repairs DSB with blunt ends and 5' overhangs with a high level of nucleotide insertion/deletion, without a need for microhomology. This protein but not LigD also suppresses homologous recombination. Overexpression dramatically increases the efficiency of NHEJ with no effect on repair fidelity. The sequence is that of Non-homologous end joining protein Ku from Mycolicibacterium smegmatis (strain ATCC 700084 / mc(2)155) (Mycobacterium smegmatis).